We begin with the raw amino-acid sequence, 315 residues long: Ribosomal RNA small subunit methyltransferase H (315 aa).

Residues 32–34 (GGH), aspartate 52, phenylalanine 78, aspartate 100, and glutamine 107 each bind S-adenosyl-L-methionine.

This sequence belongs to the methyltransferase superfamily. RsmH family.

It is found in the cytoplasm. The catalysed reaction is cytidine(1402) in 16S rRNA + S-adenosyl-L-methionine = N(4)-methylcytidine(1402) in 16S rRNA + S-adenosyl-L-homocysteine + H(+). In terms of biological role, specifically methylates the N4 position of cytidine in position 1402 (C1402) of 16S rRNA. The polypeptide is Ribosomal RNA small subunit methyltransferase H (Psychromonas ingrahamii (strain DSM 17664 / CCUG 51855 / 37)).